Reading from the N-terminus, the 429-residue chain is tRNA(Ile2) 2-agmatinylcytidine synthetase TiaS (429 aa).

The disordered stretch occupies residues 403–429 (KPPERPLHPSKSLEPPSTPIHSDTISL).

Belongs to the TiaS family.

The protein localises to the cytoplasm. The enzyme catalyses cytidine(34) in tRNA(Ile2) + agmatine + ATP + H2O = 2-agmatinylcytidine(34) in tRNA(Ile2) + AMP + 2 phosphate + 2 H(+). ATP-dependent agmatine transferase that catalyzes the formation of 2-agmatinylcytidine (agm2C) at the wobble position (C34) of tRNA(Ile2), converting the codon specificity from AUG to AUA. This is tRNA(Ile2) 2-agmatinylcytidine synthetase TiaS from Hyperthermus butylicus (strain DSM 5456 / JCM 9403 / PLM1-5).